We begin with the raw amino-acid sequence, 77 residues long: MNTSDPPAVLRIAAITLLCTASESVEQNPLIPFENAVLGSYAKMASEKRCDGWMAKCPDRDDCCETFHCTRFNARGN.

The N-terminal stretch at 1 to 21 (MNTSDPPAVLRIAAITLLCTA) is a signal peptide. Positions 22 to 49 (SESVEQNPLIPFENAVLGSYAKMASEKR) are excised as a propeptide. Disulfide bonds link Cys50-Cys64 and Cys57-Cys69.

The protein belongs to the neurotoxin 10 (Hwtx-1) family. 65 (Jztx-21) subfamily. In terms of tissue distribution, expressed by the venom gland.

It is found in the secreted. In terms of biological role, probable ion channel inhibitor. This Chilobrachys guangxiensis (Chinese earth tiger tarantula) protein is U14-theraphotoxin-Cg1c.